A 442-amino-acid polypeptide reads, in one-letter code: MRTIAIVGKPNVGKSSLFNRILMRRKSIVDDQPGVTRDRIYDVGNWLTRDFMLIDTGGIISSEDTYQDNINEQVLFAINEANTIIFLVSAKDGINNDDKKIAKMLKEKAKDKKVILVVNKVESEKYYFNEGELYSFGFGKFFKISAEHGIGMGDLLDELVKDMPIQNALDQQERFKFCIIGRPNVGKSSLTNTILGEQRMIVNAEAGSTRDSIDNDFSYHNKKYTIIDTAGVRRKGKIVEAVEKYAVLRTQKAIERSQLILLVLDGSEPFKEQDEVVGGLAYDANIPTIIVVNKWDNIVNKNSHTMEMVKKQIRSQFKYLSWAPIVFISALDNKRIHTIFETIELVREQAMRKVATSLLNDVVIKANAFQEPPPFKGGRISISYVVQVQSQIPTFVLKCNNPKFLHFSYARYIENEIRKAFGFDSVPITLYWQDKNKKLRGE.

EngA-type G domains are found at residues 2–167 and 175–351; these read RTIA…PIQN and FKFC…EQAM. Residues 8–15, 55–59, 119–122, 181–188, 228–232, and 293–296 each bind GTP; these read GKPNVGKS, DTGGI, NKVE, GRPNVGKS, DTAGV, and NKWD. Residues 352-436 form the KH-like domain; sequence RKVATSLLND…PITLYWQDKN (85 aa).

It belongs to the TRAFAC class TrmE-Era-EngA-EngB-Septin-like GTPase superfamily. EngA (Der) GTPase family. Associates with the 50S ribosomal subunit.

Its function is as follows. GTPase that plays an essential role in the late steps of ribosome biogenesis. The protein is GTPase Der of Ureaplasma urealyticum serovar 10 (strain ATCC 33699 / Western).